We begin with the raw amino-acid sequence, 122 residues long: Ribosome-binding factor A (122 aa).

The span at 95-111 shows a compositional bias: basic and acidic residues; sequence PTVERVTRIQRTLREVS. The disordered stretch occupies residues 95-122; sequence PTVERVTRIQRTLREVSGEDGDGNGTQE.

Belongs to the RbfA family. Monomer. Binds 30S ribosomal subunits, but not 50S ribosomal subunits or 70S ribosomes.

Its subcellular location is the cytoplasm. Its function is as follows. One of several proteins that assist in the late maturation steps of the functional core of the 30S ribosomal subunit. Associates with free 30S ribosomal subunits (but not with 30S subunits that are part of 70S ribosomes or polysomes). Required for efficient processing of 16S rRNA. May interact with the 5'-terminal helix region of 16S rRNA. The protein is Ribosome-binding factor A of Rubrobacter xylanophilus (strain DSM 9941 / JCM 11954 / NBRC 16129 / PRD-1).